A 305-amino-acid chain; its full sequence is MLDKLTHLKQLEAESIHIIREVAAEFDNPVMLYSIGKDSAVMLHLARKAFFPGKLPFPVLHVDTRWKFQEMYRFREKMVSEMGLELITHINPDGVAQDMNPFTYGSAKHTDVMKTEGLKQALDKYGFDAAFGGARRDEEKSRAKERVYSFRDSKHRWDPKNQRPELWNVYNGKVKKGESIRVFPLSNWTELDIWQYIYLEQIPIVPLYFAAEREVVELNGTLVMIDDERILNYLTPEQKASIHKKMVRFRTLGCYPLTGAVESTAATLPDIIQEMLLTKTSERQGRVIDHDAAGSMEEKKRQGYF.

Belongs to the PAPS reductase family. CysD subfamily. Heterodimer composed of CysD, the smaller subunit, and CysN.

The catalysed reaction is sulfate + ATP + H(+) = adenosine 5'-phosphosulfate + diphosphate. It participates in sulfur metabolism; hydrogen sulfide biosynthesis; sulfite from sulfate: step 1/3. Functionally, with CysN forms the ATP sulfurylase (ATPS) that catalyzes the adenylation of sulfate producing adenosine 5'-phosphosulfate (APS) and diphosphate, the first enzymatic step in sulfur assimilation pathway. APS synthesis involves the formation of a high-energy phosphoric-sulfuric acid anhydride bond driven by GTP hydrolysis by CysN coupled to ATP hydrolysis by CysD. This Ectopseudomonas mendocina (strain ymp) (Pseudomonas mendocina) protein is Sulfate adenylyltransferase subunit 2.